A 216-amino-acid polypeptide reads, in one-letter code: Cytidylate kinase (216 aa).

7–15 is an ATP binding site; the sequence is GPSGTGKST.

It belongs to the cytidylate kinase family. Type 1 subfamily.

Its subcellular location is the cytoplasm. The catalysed reaction is CMP + ATP = CDP + ADP. It catalyses the reaction dCMP + ATP = dCDP + ADP. This is Cytidylate kinase from Chlamydia trachomatis serovar L2 (strain ATCC VR-902B / DSM 19102 / 434/Bu).